The following is a 32-amino-acid chain: DCLGWMAGCDFNDNKCCAGYVCKKHPWCRYDL.

Intrachain disulfides connect cysteine 2-cysteine 17, cysteine 9-cysteine 22, and cysteine 16-cysteine 28.

This sequence belongs to the neurotoxin 10 (Hwtx-1) family. Expressed by the venom gland.

It is found in the secreted. Voltage-gated sodium channel Nav1.7/SCN9A inhibitor. This Selenocosmia effera (Tarantula spider) protein is Mu-theraphotoxin-Se1a.